The primary structure comprises 66 residues: uncharacterized protein (66 aa).

This is an uncharacterized protein from Vertebrata (FPV).